Consider the following 315-residue polypeptide: Protein sprouty homolog 2 (315 aa).

Positions Met-1–Leu-14 are enriched in polar residues. 2 disordered regions span residues Met-1 to Val-38 and Asn-51 to Phe-140. The segment covering Asp-20 to Asp-32 has biased composition (basic and acidic residues). A compositionally biased stretch (pro residues) spans Pro-88–His-100. The segment covering Arg-109–Phe-140 has biased composition (low complexity). The interval Ser-118–Thr-315 is required for interaction with CAV1. Residues Lys-177–Cys-291 enclose the SPR domain. The segment at Cys-178–Thr-315 is required for interaction with TESK1.

It belongs to the sprouty family. In terms of assembly, forms heterodimers with SPRY1. Forms a tripartite complex containing GAB1, METTL13 and SPRY2. Within the complex interacts with METTL13. Interacts with RAF1. Interacts (via C-terminus) with TESK1 (via C-terminus); the interaction disrupts SPRY2 interaction with GRB2, potentially via disruption of SPRY2 serine dephosphorylation. Interacts with PPP2R1A/PP2A-A and PPP2CA/PP2A-C; the interaction with PPP2CA/PP2A-C is inhibited by interaction with TESK1, possibly by vesicular sequestration of SPRY2. Inhibition of the interaction with the serine/threonine-protein phosphatase 2A (PP2A) holoenzyme results in loss of PP2A-mediated dephosphorylation, resulting in the loss of SPRY2 interaction with GRB2. Interacts with GRB2. Interacts with CBL/C-CBL; the interaction inhibits CBL-mediated ubiquitination of EGFR. Interacts (via C-terminus) with CAV1 (via C-terminus). Post-translationally, cleaved at Pro-144 by the prolyl endopeptidase FAP (seprase) activity (in vitro).

It localises to the cytoplasm. The protein resides in the cytoskeleton. Its subcellular location is the cell projection. The protein localises to the ruffle membrane. In terms of biological role, antagonist of fibroblast growth factor (FGF) pathways via inhibition of FGF-mediated phosphorylation of ERK1/2. Thereby acts as an antagonist of FGF-induced retinal lens fiber differentiation, may inhibit limb bud outgrowth and may negatively modulate respiratory organogenesis. Inhibits TGFB-induced epithelial-to-mesenchymal transition in retinal lens epithelial cells. Inhibits CBL/C-CBL-mediated EGFR ubiquitination. This chain is Protein sprouty homolog 2 (SPRY2), found in Bos taurus (Bovine).